A 261-amino-acid polypeptide reads, in one-letter code: tRNA pseudouridine synthase A (261 aa).

The Nucleophile role is filled by D51. Y109 lines the substrate pocket.

Belongs to the tRNA pseudouridine synthase TruA family. Homodimer.

The catalysed reaction is uridine(38/39/40) in tRNA = pseudouridine(38/39/40) in tRNA. Functionally, formation of pseudouridine at positions 38, 39 and 40 in the anticodon stem and loop of transfer RNAs. The protein is tRNA pseudouridine synthase A of Shewanella woodyi (strain ATCC 51908 / MS32).